The sequence spans 133 residues: MEIQQQKGVGNSKVVKVEKEESWDLFVNQASNEGHPVVAHFGASWCVTSLSMNYKFEELAQTHPEILFLYVDVDDVQSVSSKLGVKAMPTFFLIKDKEVVNKIVGANPDEVKKMVDASAESFGVTAPPDIVVE.

Residues 1 to 120 (MEIQQQKGVG…VKKMVDASAE (120 aa)) enclose the Thioredoxin domain.

This sequence belongs to the thioredoxin family.

This Oryza sativa subsp. japonica (Rice) protein is Thioredoxin-like protein CXXS1.